The sequence spans 490 residues: E3 ubiquitin-protein ligase Hakai (490 aa).

Positions 34–60 (QANKAKPAPRTQRTINRMPAKAPPGDE) are disordered. The segment at 108-148 (CDKCGLPIKIYGRMIPCKHVFCYDCAILHEKKGDKMCPGCS) adopts an RING-type zinc-finger fold. Positions 147 to 205 (CSDPVQRIEQCTRGSLFMCSIVQGCKRTYLSQRDLQAHINHRHMRAGKPVTRASLENVH) are HYB domain. The segment at 163–189 (FMCSIVQGCKRTYLSQRDLQAHINHRH) adopts a C2H2-type zinc-finger fold. Residues Ser200, Ser284, and Ser289 each carry the phosphoserine modification. A disordered region spans residues 254–490 (QPHEDIRAPP…DQTRYRPYYQ (237 aa)). Composition is skewed to pro residues over residues 341 to 358 (APPP…PHPP), 371 to 388 (APPP…PPPG), and 398 to 422 (MNHP…PPHH). Over residues 426–441 (NSLPQFTEDQGTLSPP) the composition is skewed to polar residues. Positions 456-477 (PRGPPPPPRLQGPPSQTPLPGP) are enriched in pro residues.

Belongs to the Hakai family. In terms of assembly, homodimer. Interacts with tyrosine-phosphorylated SRC substrates. Component of the WMM complex, a N6-methyltransferase complex composed of a catalytic subcomplex, named MAC, and of an associated subcomplex, named MACOM. The MAC subcomplex is composed of METTL3 and METTL14. The MACOM subcomplex is composed of WTAP, ZC3H13, CBLL1/HAKAI, VIRMA, and, in some cases of RBM15 (RBM15 or RBM15B). Also a component of a MACOM-like complex, named WTAP complex, composed of WTAP, ZC3H13, CBLL1, VIRMA, RBM15, BCLAF1 and THRAP3. Post-translationally, phosphorylated on tyrosine residues.

The protein localises to the nucleus speckle. It localises to the nucleus. The protein resides in the nucleoplasm. Its subcellular location is the cytoplasm. The enzyme catalyses S-ubiquitinyl-[E2 ubiquitin-conjugating enzyme]-L-cysteine + [acceptor protein]-L-lysine = [E2 ubiquitin-conjugating enzyme]-L-cysteine + N(6)-ubiquitinyl-[acceptor protein]-L-lysine.. Its pathway is protein modification; protein ubiquitination. Functionally, E3 ubiquitin-protein ligase that mediates ubiquitination of several tyrosine-phosphorylated Src substrates, including CDH1, CTTN and DOK1. Targets CDH1 for endocytosis and degradation. Associated component of the WMM complex, a complex that mediates N6-methyladenosine (m6A) methylation of RNAs, a modification that plays a role in the efficiency of mRNA splicing and RNA processing. Its function in the WMM complex is unknown. The sequence is that of E3 ubiquitin-protein ligase Hakai from Macaca fascicularis (Crab-eating macaque).